The following is a 479-amino-acid chain: Ribosomal RNA small subunit methyltransferase F (479 aa).

S-adenosyl-L-methionine is bound by residues 125-131, Glu149, Asp176, and Asp194; that span reads AAAPGSK. Cys247 serves as the catalytic Nucleophile.

Belongs to the class I-like SAM-binding methyltransferase superfamily. RsmB/NOP family.

It localises to the cytoplasm. It catalyses the reaction cytidine(1407) in 16S rRNA + S-adenosyl-L-methionine = 5-methylcytidine(1407) in 16S rRNA + S-adenosyl-L-homocysteine + H(+). Its function is as follows. Specifically methylates the cytosine at position 1407 (m5C1407) of 16S rRNA. This chain is Ribosomal RNA small subunit methyltransferase F, found in Salmonella enteritidis PT4 (strain P125109).